We begin with the raw amino-acid sequence, 247 residues long: Large ribosomal subunit protein uL3 (247 aa).

Disordered regions lie at residues 124–145 (RLGQSRGPMAHGSRYHRRPGSM) and 218–247 (VGQEVKAEAKDTASTEKKQAETKNDSASAE). Positions 222–241 (VKAEAKDTASTEKKQAETKN) are enriched in basic and acidic residues.

This sequence belongs to the universal ribosomal protein uL3 family. Part of the 50S ribosomal subunit. Forms a cluster with proteins L14 and L19.

In terms of biological role, one of the primary rRNA binding proteins, it binds directly near the 3'-end of the 23S rRNA, where it nucleates assembly of the 50S subunit. The chain is Large ribosomal subunit protein uL3 from Oenococcus oeni (strain ATCC BAA-331 / PSU-1).